Reading from the N-terminus, the 230-residue chain is Cytidylate kinase (230 aa).

10–18 (GPAGSGKST) contacts ATP.

The protein belongs to the cytidylate kinase family. Type 1 subfamily.

Its subcellular location is the cytoplasm. The enzyme catalyses CMP + ATP = CDP + ADP. It carries out the reaction dCMP + ATP = dCDP + ADP. The chain is Cytidylate kinase from Leptospira borgpetersenii serovar Hardjo-bovis (strain JB197).